Here is a 214-residue protein sequence, read N- to C-terminus: Adenylate kinase (214 aa).

Position 10 to 15 (10 to 15) interacts with ATP; the sequence is GAGKGT. Residues 30-59 are NMP; that stretch reads STGDMLRAAIKAGSELGQKAKILMDMGQLV. AMP is bound by residues Thr-31, Arg-36, 57–59, 85–88, and Gln-92; these read QLV and GFPR. Residues 122-159 are LID; that stretch reads GRRVHPASGRTYHIVYNPPKVEDKDDITGEDLILRADD. Residues Arg-123 and 132 to 133 each bind ATP; that span reads TY. Residues Arg-156 and Arg-167 each coordinate AMP. Gln-200 contacts ATP.

Belongs to the adenylate kinase family. In terms of assembly, monomer.

It is found in the cytoplasm. It carries out the reaction AMP + ATP = 2 ADP. The protein operates within purine metabolism; AMP biosynthesis via salvage pathway; AMP from ADP: step 1/1. In terms of biological role, catalyzes the reversible transfer of the terminal phosphate group between ATP and AMP. Plays an important role in cellular energy homeostasis and in adenine nucleotide metabolism. The protein is Adenylate kinase of Histophilus somni (strain 129Pt) (Haemophilus somnus).